Reading from the N-terminus, the 474-residue chain is UDP-glycosyltransferase 71C2 (474 aa).

Residues Ser293, 352-354 (APQ), 369-377 (HCGWNSILE), and 391-394 (YAEQ) contribute to the UDP-alpha-D-glucose site.

Belongs to the UDP-glycosyltransferase family.

Its function is as follows. Possesses low quercetin 3-O-glucosyltransferase, 7-O-glucosyltransferase and 3'-O-glucosyltransferase activities in vitro. Glucosylates other secondary metabolites in vitro like vanillin, trans-resveratrol, curumin and etoposide. This is UDP-glycosyltransferase 71C2 (UGT71C2) from Arabidopsis thaliana (Mouse-ear cress).